The following is a 269-amino-acid chain: Protein OPG079 (269 aa).

Belongs to the orthopoxvirus OPG079 family. As to quaternary structure, homoomultimer (Potential). Interacts with the small subunit of ribonucleotide reductase. Interacts with host FAM111A; this interaction protomtes OPG079 degradation through autophagy.

It localises to the host cytoplasm. In terms of biological role, plays an essential role in viral DNA replication. Binds to ssDNA with high affinity and localizes to cytoplasmic factories where nascent viral genomes accumulate. May disrupt loops, hairpins and other secondary structures present on ssDNA to reduce and eliminate pausing of viral DNA polymerase at specific sites during elongation. In Variola virus (isolate Human/India/Ind3/1967) (VARV), this protein is Protein OPG079 (OPG079).